We begin with the raw amino-acid sequence, 160 residues long: Cytochrome b6-f complex subunit 4 (160 aa).

3 helical membrane-spanning segments follow: residues 36–56 (LLYV…ALAV), 95–115 (LLGV…PFIE), and 131–151 (TVFL…ALPL).

This sequence belongs to the cytochrome b family. PetD subfamily. As to quaternary structure, the 4 large subunits of the cytochrome b6-f complex are cytochrome b6, subunit IV (17 kDa polypeptide, PetD), cytochrome f and the Rieske protein, while the 4 small subunits are PetG, PetL, PetM and PetN. The complex functions as a dimer.

Its subcellular location is the cellular thylakoid membrane. In terms of biological role, component of the cytochrome b6-f complex, which mediates electron transfer between photosystem II (PSII) and photosystem I (PSI), cyclic electron flow around PSI, and state transitions. The sequence is that of Cytochrome b6-f complex subunit 4 from Trichormus variabilis (strain ATCC 29413 / PCC 7937) (Anabaena variabilis).